The chain runs to 71 residues: Protein CYSTEINE-RICH TRANSMEMBRANE MODULE 3 (71 aa).

Positions 30-49 (VMMKDSPQTVQPPHEGQSKG) are disordered. The chain crosses the membrane as a helical span at residues 48–64 (KGSGGFLRGCLAAMCCC).

Belongs to the CYSTM1 family. As to quaternary structure, heterodimers. Interacts with CYSTM7 and WIH1/CYSTM13. As to expression, mostly expressed in leaves and flowers and, to a lower extent, in stems, siliques, shoots and roots.

It is found in the cell membrane. Its subcellular location is the cytoplasm. The protein localises to the mitochondrion. Its function is as follows. Negatively regulates salt stress responses and Na(+) homeostasis. Prevents Na(+) efflux, disturbs reactive oxygen species (ROS) homeostasis, and represses the expression of nuclear salt stress-responsive genes. Involved in resistance to abiotic stress. The protein is Protein CYSTEINE-RICH TRANSMEMBRANE MODULE 3 of Arabidopsis thaliana (Mouse-ear cress).